We begin with the raw amino-acid sequence, 593 residues long: Probable tripeptidyl-peptidase SED3 (593 aa).

Positions 1 to 18 (MLLRWHSVIPLFLAMTVA) are cleaved as a signal peptide. Positions 19–198 (FPNTYRTVVE…NLQAIYLSTN (180 aa)) are cleaved as a propeptide — removed in mature form. 3 N-linked (GlcNAc...) asparagine glycosylation sites follow: asparagine 204, asparagine 261, and asparagine 275. Residues 206-592 (TITPRCLREL…RILAKIVQHM (387 aa)) form the Peptidase S53 domain. Active-site charge relay system residues include glutamate 282 and aspartate 286. N-linked (GlcNAc...) asparagine glycosylation occurs at asparagine 295. Serine 496 functions as the Charge relay system in the catalytic mechanism. The Ca(2+) site is built by aspartate 538 and isoleucine 539. 2 N-linked (GlcNAc...) asparagine glycosylation sites follow: asparagine 554 and asparagine 566. Ca(2+) is bound by residues glycine 570 and aspartate 572.

Requires Ca(2+) as cofactor.

It is found in the secreted. The protein resides in the extracellular space. The enzyme catalyses Release of an N-terminal tripeptide from a polypeptide.. In terms of biological role, secreted tripeptidyl-peptidase which degrades proteins at acidic pHs and is involved in virulence. The polypeptide is Probable tripeptidyl-peptidase SED3 (SED3) (Arthroderma benhamiae (strain ATCC MYA-4681 / CBS 112371) (Trichophyton mentagrophytes)).